The sequence spans 90 residues: Small ribosomal subunit protein bS16 (90 aa).

This sequence belongs to the bacterial ribosomal protein bS16 family.

In Lysinibacillus sphaericus (strain C3-41), this protein is Small ribosomal subunit protein bS16.